We begin with the raw amino-acid sequence, 261 residues long: Probable cyclic nucleotide phosphodiesterase PSM_A2567 (261 aa).

Residues aspartate 22, histidine 24, aspartate 62, asparagine 94, histidine 160, histidine 198, and histidine 200 each coordinate Fe cation. AMP contacts are provided by residues histidine 24, aspartate 62, and 94–95; that span reads NH. Histidine 200 lines the AMP pocket.

Belongs to the cyclic nucleotide phosphodiesterase class-III family. Fe(2+) serves as cofactor.

In Pseudoalteromonas sp. (strain SM9913), this protein is Probable cyclic nucleotide phosphodiesterase PSM_A2567.